The following is a 700-amino-acid chain: Inhibitor of carbonic anhydrase (700 aa).

An N-terminal signal peptide occupies residues 1–19; the sequence is MRLLICALLCLGTLGLCLA. Transferrin-like domains follow at residues 25 to 347 and 355 to 685; these read IRWC…NLKR and VKWC…NFRQ. 16 cysteine pairs are disulfide-bonded: Cys-28–Cys-67, Cys-38–Cys-58, Cys-137–Cys-213, Cys-172–Cys-188, Cys-175–Cys-198, Cys-185–Cys-196, Cys-246–Cys-260, Cys-358–Cys-390, Cys-368–Cys-381, Cys-415–Cys-695, Cys-438–Cys-658, Cys-470–Cys-545, Cys-494–Cys-686, Cys-504–Cys-518, Cys-515–Cys-528, and Cys-585–Cys-599. N-linked (GlcNAc...) asparagine glycosylation is present at Asn-664.

This sequence belongs to the transferrin family. As to quaternary structure, monomer. Interacts (via transferrin-like domain 2) with CA2. In terms of processing, N-glycosylated. As to expression, detected in blood plasma, heart, kidney, liver, colon, lung, spleen, pancreas and testis (at protein level).

The protein localises to the secreted. Inhibitor for carbonic anhydrase 2 (CA2). Does not bind iron ions. This chain is Inhibitor of carbonic anhydrase, found in Mus musculus (Mouse).